The chain runs to 1090 residues: Protein transport protein Sec24A (1090 aa).

2 disordered regions span residues 1–260 (MAQP…AHNT) and 272–325 (TPQL…TQTP). Low complexity predominate over residues 8–28 (AARGAAASLQAQNGAASASGS). 3 stretches are compositionally biased toward polar residues: residues 29–55 (PYTN…SQPP), 138–151 (WQYN…QTNH), and 162–184 (GNPN…QTSF). Residues 194–236 (QNPPLPPTFQPGAPPGPPPAGGPPPSRGPAPQKTPPRAAPPPS) show a composition bias toward pro residues. Polar residues-rich tracts occupy residues 237–258 (FNSA…TAAH), 274–286 (QLVN…SRSV), and 313–325 (SYPS…TQTP). Zn(2+)-binding residues include C428, C431, C449, and C452. The interval 428–452 (CRSCRTYINPFVNFLDQRRWKCNLC) is zinc finger-like. The stretch at 963–1036 (PQPPILQLSV…PESARIAAFI (74 aa)) is one Gelsolin-like repeat.

The protein belongs to the SEC23/SEC24 family. SEC24 subfamily. As to quaternary structure, COPII is composed of at least five proteins: the Sec23/24 complex, the Sec13/31 complex and Sar1. Interacts with TMED2. Interacts (as part of the Sec23/24 complex) with SEC22B; recruits SEC22B into COPII-coated vesicles for its transport from the endoplasmic reticulum to the Golgi. Interacts with STING1; promoting STING1 translocation to COPII vesicles in a STEEP1-dependent manner. Interacts with TMEM39A. Interacts with SACM1L; this interaction is reduced in the absence of TMEM39A. Interacts with kinase FAM20C; transport of FAM20C from the endoplasmic reticulum to the Golgi is likely to be mediated by COPII vesicles.

It is found in the cytoplasmic vesicle. Its subcellular location is the COPII-coated vesicle membrane. The protein localises to the endoplasmic reticulum membrane. The protein resides in the cytoplasm. It localises to the cytosol. Its function is as follows. Component of the coat protein complex II (COPII) which promotes the formation of transport vesicles from the endoplasmic reticulum (ER). The coat has two main functions, the physical deformation of the endoplasmic reticulum membrane into vesicles and the selection of cargo molecules for their transport to the Golgi complex. Plays a central role in cargo selection within the COPII complex and together with SEC24B may have a different specificity compared to SEC24C and SEC24D. May package preferentially cargos with cytoplasmic DxE or LxxLE motifs and may also recognize conformational epitopes. The protein is Protein transport protein Sec24A of Mus musculus (Mouse).